Reading from the N-terminus, the 368-residue chain is PPE family immunomodulator PPE68 (368 aa).

Disordered stretches follow at residues 255 to 280 (LGTS…LLRA) and 312 to 368 (AAAG…EDDW). A compositionally biased stretch (low complexity) spans 312 to 327 (AAAGSSATGGAAPVGA). Residues 354 to 368 (REEDDEDDWDEEDDW) are compositionally biased toward acidic residues.

It belongs to the mycobacterial PPE family. As to quaternary structure, homodimer. Interacts with PE35. PE35/PPE68 complex interacts with human TLR2.

The protein resides in the secreted. The protein localises to the cell wall. It is found in the cell membrane. Its subcellular location is the cell surface. Functionally, plays a major role in RD1-associated pathogenesis, and may contribute to the establishment and maintenance of M.tuberculosis infection. Together with PE35, stimulates the secretion of IL-10 and MCP-1 from human macrophages, via the interaction with human Toll-like receptor 2 (TLR2). This Mycobacterium tuberculosis (strain CDC 1551 / Oshkosh) protein is PPE family immunomodulator PPE68 (PPE68).